A 493-amino-acid chain; its full sequence is Cysteine--tRNA ligase (493 aa).

Cysteine 29 lines the Zn(2+) pocket. Residues 31 to 41 carry the 'HIGH' region motif; the sequence is VTVYDYCHIGH. Cysteine 209, histidine 234, and glutamate 238 together coordinate Zn(2+). The 'KMSKS' region motif lies at 266–270; sequence KMSKS. Residue lysine 269 coordinates ATP.

Belongs to the class-I aminoacyl-tRNA synthetase family. Monomer. Requires Zn(2+) as cofactor.

Its subcellular location is the cytoplasm. The catalysed reaction is tRNA(Cys) + L-cysteine + ATP = L-cysteinyl-tRNA(Cys) + AMP + diphosphate. This chain is Cysteine--tRNA ligase, found in Pelobacter propionicus (strain DSM 2379 / NBRC 103807 / OttBd1).